Consider the following 443-residue polypeptide: ASTRA-associated protein 1 (443 aa).

4 WD repeats span residues 23-67 (YHKR…PITH), 71-110 (EGNSHIIAFWWVETTNVLYILSKDSMLRIFELDSSTQLSI), 258-295 (HYPNPILDMCVSGDELYSCSTDDFITKYKIPVNLQLET), and 318-359 (KVHL…VEQT). Residues 372–391 (SSMGDLTNGSGSNTESSSKS) are disordered. Low complexity predominate over residues 378-391 (TNGSGSNTESSSKS).

Belongs to the WD repeat ASA1 family. Component of the ASTRA chromatin remodeling machinery complex composed of at least RVB1, RVB2, TRA1, TEL2, TTI1 and TTI2.

Its subcellular location is the nucleus. Component of the ASTRA complex involved in chromatin remodeling. The chain is ASTRA-associated protein 1 (ASA1) from Saccharomyces cerevisiae (strain RM11-1a) (Baker's yeast).